The following is a 74-amino-acid chain: Sodium channel neurotoxin MeuNaTxalpha-6 (74 aa).

Residues 1 to 7 form the signal peptide; the sequence is LMTGVES. Residues 9–73 enclose the LCN-type CS-alpha/beta domain; sequence RDAYIAKPHN…VPIRIPGKCH (65 aa). Disulfide bonds link C19/C72, C23/C45, C31/C55, and C35/C57. R74 is a propeptide (removed by a carboxypeptidase).

Belongs to the long (4 C-C) scorpion toxin superfamily. Sodium channel inhibitor family. Alpha subfamily. As to expression, expressed by the venom gland.

The protein resides in the secreted. In terms of biological role, alpha toxins bind voltage-independently at site-3 of sodium channels (Nav) and inhibit the inactivation of the activated channels, thereby blocking neuronal transmission. This is Sodium channel neurotoxin MeuNaTxalpha-6 from Mesobuthus eupeus (Lesser Asian scorpion).